The primary structure comprises 256 residues: Chloroplastic group IIB intron splicing facilitator CRS2, chloroplastic (256 aa).

The transit peptide at 1-45 directs the protein to the chloroplast; it reads MSLLAAAIPSTSSHFSAPFLPSFRMPRKSLTAPLHRIRRPRPFTV. Tyr-74 provides a ligand contact to tRNA. Residue His-79 is the Proton acceptor of the active site. Residues Tyr-124, Asn-126, and Asn-172 each contribute to the tRNA site.

The protein belongs to the PTH family. CRS2 subfamily. In terms of assembly, interacts with CAF1 and CAF2. Part of large ribonucleo-protein complexes that include group IIB introns and either CAF1 or CAF2.

The protein resides in the plastid. The protein localises to the chloroplast stroma. Required for the splicing of group IIB introns in chloroplasts. Forms complexes with either CAF1 or CAF2 which, in turn, interact with RNA and confer intron specificity of the splicing particles. Has no peptidyl-tRNA hydrolase activity. This Zea mays (Maize) protein is Chloroplastic group IIB intron splicing facilitator CRS2, chloroplastic (CRS2).